The following is a 363-amino-acid chain: Zinc finger protein 830 (363 aa).

Ala2 carries the post-translational modification N-acetylalanine. Residues 16 to 40 are a coiled coil; that stretch reads VNQEELRRLMREKQRLSTNRKRIES. Residues 53 to 75 form a C2H2-type zinc finger; it reads CALCNTPVKSELLWQTHVLGKQH. The disordered stretch occupies residues 81–213; sequence ELKGAKGATQ…NPPKAPLVPH (133 aa). A compositionally biased stretch (polar residues) spans 90–99; that stretch reads QGPSTGTVPQ. A compositionally biased stretch (basic and acidic residues) spans 104–115; that stretch reads RATDVESQDAKK. Positions 129–143 are enriched in low complexity; sequence SASSANLDAARAAPS. The segment covering 152–164 has biased composition (acidic residues); that stretch reads DYDDEEEEEEEGG. A compositionally biased stretch (basic and acidic residues) spans 165–184; it reads GEERRDSSKHLPDAQGKEHS. Over residues 189-205 the composition is skewed to polar residues; that stretch reads RETTSNVLPNDPFNTNP. The residue at position 216 (Ser216) is a Phosphoserine. Residues 303–331 adopt a coiled-coil conformation; the sequence is IECYRRVEKLRNRQDEIKNKLKEVLTIKE. Ser342 and Ser353 each carry phosphoserine.

In terms of assembly, component of the XAB2 complex, a multimeric protein complex composed of XAB2, PRPF19, AQR, ZNF830, ISY1, and PPIE; this complex binds preferentially to RNA. Interacts with XAB2. Identified in a pentameric intron-binding (IB) complex composed of AQR, XAB2, ISY1, ZNF830 and PPIE that is incorporated into the spliceosome as a preassembled complex. The IB complex does not contain PRPF19. In terms of processing, phosphorylated in response to DNA damage by the cell cycle checkpoint kinases ATR/ATM. As to expression, widely expressed at low level. Expressed in oocytes from primordial to antral follicles. Also detected in somatic cells of the ovary, namely, in granulosa cells from the pre-antral follicle stage onward.

The protein resides in the nucleus. It localises to the chromosome. It is found in the nucleus speckle. May play a role in pre-mRNA splicing as component of the spliceosome. Acts as an important regulator of the cell cycle that participates in the maintenance of genome integrity. During cell cycle progression in embryonic fibroblast, prevents replication fork collapse, double-strand break formation and cell cycle checkpoint activation. Controls mitotic cell cycle progression and cell survival in rapidly proliferating intestinal epithelium and embryonic stem cells. During the embryo preimplantation, controls different aspects of M phase. During early oocyte growth, plays a role in oocyte survival by preventing chromosomal breaks formation, activation of TP63 and reduction of transcription. This chain is Zinc finger protein 830, found in Mus musculus (Mouse).